The chain runs to 130 residues: DNA-directed RNA polymerase subunit omega (130 aa).

Residues 107 to 130 are disordered; the sequence is SLDVSQESHDDEIDDQDSGEEVPI. A compositionally biased stretch (acidic residues) spans 115-130; that stretch reads HDDEIDDQDSGEEVPI.

This sequence belongs to the RNA polymerase subunit omega family. The RNAP catalytic core consists of 2 alpha, 1 beta, 1 beta' and 1 omega subunit. When a sigma factor is associated with the core the holoenzyme is formed, which can initiate transcription.

The enzyme catalyses RNA(n) + a ribonucleoside 5'-triphosphate = RNA(n+1) + diphosphate. In terms of biological role, promotes RNA polymerase assembly. Latches the N- and C-terminal regions of the beta' subunit thereby facilitating its interaction with the beta and alpha subunits. This Wolbachia pipientis subsp. Culex pipiens (strain wPip) protein is DNA-directed RNA polymerase subunit omega.